The primary structure comprises 191 residues: tRNA-specific adenosine deaminase 2 (191 aa).

The CMP/dCMP-type deaminase domain occupies 20-145 (EETEKWMEEA…SVLNIASADL (126 aa)). His71 lines the Zn(2+) pocket. Glu73 (proton donor) is an active-site residue. Cys107 and Cys110 together coordinate Zn(2+).

This sequence belongs to the cytidine and deoxycytidylate deaminase family. ADAT2 subfamily. The cofactor is Zn(2+).

It carries out the reaction adenosine(34) in tRNA + H2O + H(+) = inosine(34) in tRNA + NH4(+). Its function is as follows. Probably participates in deamination of adenosine-34 to inosine in many tRNAs. The protein is tRNA-specific adenosine deaminase 2 (ADAT2) of Homo sapiens (Human).